The sequence spans 531 residues: Maturase K (531 aa).

The protein belongs to the intron maturase 2 family. MatK subfamily.

It is found in the plastid. The protein resides in the chloroplast. In terms of biological role, usually encoded in the trnK tRNA gene intron. Probably assists in splicing its own and other chloroplast group II introns. This is Maturase K from Ephedra sinica (Chinese ephedra).